A 215-amino-acid polypeptide reads, in one-letter code: MAASQTIADSKRAFHQAFPHVIAPLYRRLADELLVELHLLSHQSRFEANELFSVGLCTVFDTFIKGYRPEAQTDALFRALCSSNGFDAAKLRKTYASLVEQAKGKDPESLKDWLSSHALKEGSHYSRLMAVGLMSLLKAAAADATDSDTEAIVKQSKELAEGLGLPTDRVEKDLTLFGSNSERMDQAVELVEETIAAEKRKKERRLEEQAQRTSS.

Positions 182-213 form a coiled coil; the sequence is ERMDQAVELVEETIAAEKRKKERRLEEQAQRT.

Belongs to the THF1 family.

In terms of biological role, may be involved in photosynthetic membrane biogenesis. The protein is Protein Thf1 of Synechococcus sp. (strain CC9605).